Here is a 279-residue protein sequence, read N- to C-terminus: 2-dehydropantoate 2-reductase (279 aa).

Residues 6–11 (GLGAVG), Lys-66, and Asn-86 each bind NADP(+). The Proton donor role is filled by Lys-158. Substrate contacts are provided by residues Lys-158, Asn-162, Asn-166, Asn-176, and 225–228 (NLSS). Residue Glu-240 participates in NADP(+) binding.

This sequence belongs to the ketopantoate reductase family.

The protein resides in the cytoplasm. It catalyses the reaction (R)-pantoate + NAD(+) = 2-dehydropantoate + NADH + H(+). It carries out the reaction (R)-pantoate + NADP(+) = 2-dehydropantoate + NADPH + H(+). It functions in the pathway cofactor biosynthesis; coenzyme A biosynthesis. Functionally, catalyzes the NAD(P)H-dependent reduction of ketopantoate into pantoic acid. The polypeptide is 2-dehydropantoate 2-reductase (Pyrobaculum aerophilum (strain ATCC 51768 / DSM 7523 / JCM 9630 / CIP 104966 / NBRC 100827 / IM2)).